A 519-amino-acid chain; its full sequence is Voltage-gated potassium channel regulatory subunit KCNG4 (519 aa).

The disordered stretch occupies residues 1 to 25 (MPMPSRDGGLHPRHHHYGSHSPWSQ). Residues 1–218 (MPMPSRDGGL…EMVENPQSGL (218 aa)) lie on the Cytoplasmic side of the membrane. Residues 219 to 240 (PGKVFACLSILFVATTAVSLCV) form a helical membrane-spanning segment. The Extracellular portion of the chain corresponds to 241–261 (STMPDLRAEEDQGECSRKCYY). A helical membrane pass occupies residues 262 to 283 (IFIVETICVAWFSLEFCLRFVQ). Residues 284–294 (AQDKCQFFQGP) lie on the Cytoplasmic side of the membrane. The helical transmembrane segment at 295 to 314 (LNIIDILAISPYYVSLAVSE) threads the bilayer. The Extracellular segment spans residues 315–328 (EPPEDGERPSGSSY). A helical; Voltage-sensor membrane pass occupies residues 329 to 353 (LEKVGLVLRVLRALRILYVMRLARH). Over 354 to 368 (SLGLQTLGLTVRRCT) the chain is Cytoplasmic. Residues 369–390 (REFGLLLLFLAVAITLFSPLVY) traverse the membrane as a helical segment. Residues 391-405 (VAEKESGRVLEFTSI) are Extracellular-facing. The segment at residues 406 to 417 (PASYWWAIISMT) is an intramembrane region (helical). The Selectivity filter signature appears at 418–423 (TVGYGD). The stretch at 418 to 425 (TVGYGDMV) is an intramembrane region. At 426-432 (PRSVPGQ) the chain is on the extracellular side. The chain crosses the membrane as a helical span at residues 433–461 (MVALSSILSGILIMAFPATSIFHTFSHSY). The Cytoplasmic portion of the chain corresponds to 462–519 (LELKKEQEQLQARLRHLQNTGPASECELLDPHVASEHELMNDVNDLILEGPALPIMHM).

The protein belongs to the potassium channel family. G (TC 1.A.1.2) subfamily. Kv6.4/KCNG4 sub-subfamily. As to quaternary structure, heterotetramer with KCNB1. Does not form homomultimer. Highly expressed in brain, and at lower levels in liver, small intestine and colon.

The protein localises to the cell membrane. Functionally, regulatory subunit of the voltage-gated potassium (Kv) channel which, when coassembled with KCNB1, modulates the kinetics parameters of the heterotetrameric channel namely the time course of activation, deactivation and inactivation and on the voltage-dependence of activation. Potassium channel subunit that does not form functional channels by itself. Reduces the deactivation rate. Modulates the threshold for activation by shifting by approximately 20 mV in hyperpolarizing direction. Markedly changes the inactivation by shifting the voltage dependence of inactivation by approximately 40 mV in hyperpolarizing direction. Acceleratee activation and enhances the time course of activation. The chain is Voltage-gated potassium channel regulatory subunit KCNG4 from Homo sapiens (Human).